The following is a 264-amino-acid chain: Virulence plasmid protein pGP3-D (264 aa).

In Chlamydia trachomatis serovar L2 (strain ATCC VR-902B / DSM 19102 / 434/Bu), this protein is Virulence plasmid protein pGP3-D.